The sequence spans 729 residues: Fatty acid oxidation complex subunit alpha (729 aa).

Positions 1–189 (MLYKGDTLYL…KIGLVDGVVK (189 aa)) are enoyl-CoA hydratase/isomerase. Aspartate 296 lines the substrate pocket. A 3-hydroxyacyl-CoA dehydrogenase region spans residues 311 to 729 (ETPKQAAVLG…ARPVGDLKTA (419 aa)). NAD(+) is bound by residues methionine 324, aspartate 343, 400–402 (VVE), lysine 407, and serine 429. Histidine 450 acts as the For 3-hydroxyacyl-CoA dehydrogenase activity in catalysis. Asparagine 453 serves as a coordination point for NAD(+). Substrate is bound by residues asparagine 500 and tyrosine 660. A disordered region spans residues 708–729 (RHNEPYYPPVEPARPVGDLKTA).

It in the N-terminal section; belongs to the enoyl-CoA hydratase/isomerase family. The protein in the C-terminal section; belongs to the 3-hydroxyacyl-CoA dehydrogenase family. As to quaternary structure, heterotetramer of two alpha chains (FadB) and two beta chains (FadA).

The enzyme catalyses a (3S)-3-hydroxyacyl-CoA + NAD(+) = a 3-oxoacyl-CoA + NADH + H(+). The catalysed reaction is a (3S)-3-hydroxyacyl-CoA = a (2E)-enoyl-CoA + H2O. It catalyses the reaction a 4-saturated-(3S)-3-hydroxyacyl-CoA = a (3E)-enoyl-CoA + H2O. It carries out the reaction (3S)-3-hydroxybutanoyl-CoA = (3R)-3-hydroxybutanoyl-CoA. The enzyme catalyses a (3Z)-enoyl-CoA = a 4-saturated (2E)-enoyl-CoA. The catalysed reaction is a (3E)-enoyl-CoA = a 4-saturated (2E)-enoyl-CoA. It participates in lipid metabolism; fatty acid beta-oxidation. Functionally, involved in the aerobic and anaerobic degradation of long-chain fatty acids via beta-oxidation cycle. Catalyzes the formation of 3-oxoacyl-CoA from enoyl-CoA via L-3-hydroxyacyl-CoA. It can also use D-3-hydroxyacyl-CoA and cis-3-enoyl-CoA as substrate. The polypeptide is Fatty acid oxidation complex subunit alpha (Escherichia coli O139:H28 (strain E24377A / ETEC)).